The sequence spans 157 residues: Anaerobic nitrite reductase Hb1 (157 aa).

A Globin domain is found at 5–154 (GFTEEQEALV…LAEAIKSEMK (150 aa)). A Homodimerization motif is present at residues 38-42 (EIAPA). Heme b is bound by residues Ser48, Lys62, His66, Arg96, Thr100, and His101. Residues 108–120 (AEHFEVTKLALLE) carry the Homodimerization motif.

This sequence belongs to the plant globin family. In terms of assembly, homodimer. Heme b is required as a cofactor. In terms of tissue distribution, predominantly expressed in leaves, to a lower extent in roots, and barely in stems, flowers and seeds.

It is found in the cytoplasm. Its subcellular location is the nucleus. It carries out the reaction Fe(III)-heme b-[protein] + nitric oxide + H2O = Fe(II)-heme b-[protein] + nitrite + 2 H(+). Its function is as follows. Phytoglobin that reduces nitrite to nitric oxide (NO) under anoxic conditions (e.g. during flooding or in waterlogged soil) and upon root nodulation. Required for general plant development and during nodulation, especially for the onset of symbiosis. Monitors nitric oxide (NO) levels during early phase of the nitrogen-fixing symbiosis and buffers oxygen in functioning nodules. May not function as an oxygen storage or transport protein. Has an unusually high affinity for O(2) through a hexacoordinate heme iron because of a very low dissociation constant. Involved in water stress tolerance. In Glycine max (Soybean), this protein is Anaerobic nitrite reductase Hb1.